A 239-amino-acid chain; its full sequence is Serine protease SplD (239 aa).

The N-terminal stretch at 1-36 is a signal peptide; it reads MNKNIIIKSIAALTILTSITGVGTTVVDGIQQTAKA. Catalysis depends on charge relay system residues H75, D114, and S192.

The protein belongs to the peptidase S1B family.

It is found in the secreted. The sequence is that of Serine protease SplD (splD) from Staphylococcus aureus (strain COL).